Consider the following 227-residue polypeptide: 7-cyano-7-deazaguanine synthase (227 aa).

8–18 (FSGGQDSTTCL) is a binding site for ATP. Zn(2+)-binding residues include C187, C196, C199, and C202.

This sequence belongs to the QueC family. Zn(2+) serves as cofactor.

The catalysed reaction is 7-carboxy-7-deazaguanine + NH4(+) + ATP = 7-cyano-7-deazaguanine + ADP + phosphate + H2O + H(+). It participates in purine metabolism; 7-cyano-7-deazaguanine biosynthesis. Its function is as follows. Catalyzes the ATP-dependent conversion of 7-carboxy-7-deazaguanine (CDG) to 7-cyano-7-deazaguanine (preQ(0)). The protein is 7-cyano-7-deazaguanine synthase of Aliivibrio fischeri (strain ATCC 700601 / ES114) (Vibrio fischeri).